The sequence spans 398 residues: Succinate--CoA ligase [ADP-forming] subunit beta (398 aa).

In terms of domain architecture, ATP-grasp spans 9–254 (KRLLHEYGAP…ISEEDPKEIE (246 aa)). Residues K46, 53–55 (GRG), E109, A112, and E117 contribute to the ATP site. Mg(2+) is bound by residues N209 and D223. Residues N274 and 331 to 333 (GIM) contribute to the substrate site.

It belongs to the succinate/malate CoA ligase beta subunit family. As to quaternary structure, heterotetramer of two alpha and two beta subunits. It depends on Mg(2+) as a cofactor.

It catalyses the reaction succinate + ATP + CoA = succinyl-CoA + ADP + phosphate. The enzyme catalyses GTP + succinate + CoA = succinyl-CoA + GDP + phosphate. Its pathway is carbohydrate metabolism; tricarboxylic acid cycle; succinate from succinyl-CoA (ligase route): step 1/1. Functionally, succinyl-CoA synthetase functions in the citric acid cycle (TCA), coupling the hydrolysis of succinyl-CoA to the synthesis of either ATP or GTP and thus represents the only step of substrate-level phosphorylation in the TCA. The beta subunit provides nucleotide specificity of the enzyme and binds the substrate succinate, while the binding sites for coenzyme A and phosphate are found in the alpha subunit. The sequence is that of Succinate--CoA ligase [ADP-forming] subunit beta from Bartonella bacilliformis (strain ATCC 35685 / KC583 / Herrer 020/F12,63).